Consider the following 64-residue polypeptide: Translational regulator CsrA (64 aa).

Belongs to the CsrA/RsmA family. Homodimer; the beta-strands of each monomer intercalate to form a hydrophobic core, while the alpha-helices form wings that extend away from the core.

It localises to the cytoplasm. A key translational regulator that binds mRNA to regulate translation initiation and/or mRNA stability. Mediates global changes in gene expression, shifting from rapid growth to stress survival by linking envelope stress, the stringent response and the catabolite repression systems. Usually binds in the 5'-UTR; binding at or near the Shine-Dalgarno sequence prevents ribosome-binding, repressing translation, binding elsewhere in the 5'-UTR can activate translation and/or stabilize the mRNA. Its function is antagonized by small RNA(s). In Methylococcus capsulatus (strain ATCC 33009 / NCIMB 11132 / Bath), this protein is Translational regulator CsrA.